A 320-amino-acid chain; its full sequence is Cytochrome f (320 aa).

Residues 1 to 35 (MRNINTYDWMKKWMTRSISILVMIHMITRTSISNA) form the signal peptide. Residues Y36, C56, C59, and H60 each contribute to the heme site. Residues 286-306 (VQGLLLLLASVILAQIFLVLK) traverse the membrane as a helical segment.

It belongs to the cytochrome f family. The 4 large subunits of the cytochrome b6-f complex are cytochrome b6, subunit IV (17 kDa polypeptide, petD), cytochrome f and the Rieske protein, while the 4 small subunits are PetG, PetL, PetM and PetN. The complex functions as a dimer. Heme is required as a cofactor.

It localises to the plastid. It is found in the chloroplast thylakoid membrane. In terms of biological role, component of the cytochrome b6-f complex, which mediates electron transfer between photosystem II (PSII) and photosystem I (PSI), cyclic electron flow around PSI, and state transitions. The polypeptide is Cytochrome f (Cycas taitungensis (Prince sago)).